The sequence spans 351 residues: Phosphoribosylformylglycinamidine cyclo-ligase (351 aa).

This sequence belongs to the AIR synthase family.

It is found in the cytoplasm. The enzyme catalyses 2-formamido-N(1)-(5-O-phospho-beta-D-ribosyl)acetamidine + ATP = 5-amino-1-(5-phospho-beta-D-ribosyl)imidazole + ADP + phosphate + H(+). The protein operates within purine metabolism; IMP biosynthesis via de novo pathway; 5-amino-1-(5-phospho-D-ribosyl)imidazole from N(2)-formyl-N(1)-(5-phospho-D-ribosyl)glycinamide: step 2/2. This Lysinibacillus sphaericus (strain C3-41) protein is Phosphoribosylformylglycinamidine cyclo-ligase.